The sequence spans 216 residues: Guanylate kinase (216 aa).

One can recognise a Guanylate kinase-like domain in the interval 11 to 189; that stretch reads GVLIVISGPS…AVKKIEAILL (179 aa). 18–25 contacts ATP; sequence GPSGAGKG.

It belongs to the guanylate kinase family.

The protein resides in the cytoplasm. It carries out the reaction GMP + ATP = GDP + ADP. Essential for recycling GMP and indirectly, cGMP. In Clostridium perfringens (strain 13 / Type A), this protein is Guanylate kinase (gmk).